Here is a 47-residue protein sequence, read N- to C-terminus: Potassium channel toxin gamma-KTx 5.2 (47 aa).

4 disulfides stabilise this stretch: C5–C23, C11–C34, C20–C39, and C24–C41.

Belongs to the ergtoxin family. Gamma-KTx 5 subfamily. Expressed by the venom gland.

It is found in the secreted. Reversibly blocks Kv11/ERG potassium channels. The protein is Potassium channel toxin gamma-KTx 5.2 of Centruroides gracilis (Slenderbrown scorpion).